Consider the following 284-residue polypeptide: Tropomyosin alpha-1 chain (284 aa).

Residues Met1–Gln38 form a disordered region. A coiled-coil region spans residues Met1–Ile284. Residues Lys12–Gln38 show a composition bias toward basic and acidic residues.

The protein belongs to the tropomyosin family. As to quaternary structure, homodimer. Heterodimer of an alpha (TPM1, TPM3 or TPM4) and a beta (TPM2) chain.

It localises to the cytoplasm. It is found in the cytoskeleton. In terms of biological role, binds to actin filaments in muscle and non-muscle cells. Plays a central role, in association with the troponin complex, in the calcium dependent regulation of vertebrate striated muscle contraction. Smooth muscle contraction is regulated by interaction with caldesmon. In non-muscle cells is implicated in stabilizing cytoskeleton actin filaments. The protein is Tropomyosin alpha-1 chain (tpm1) of Xenopus laevis (African clawed frog).